An 811-amino-acid polypeptide reads, in one-letter code: Protein VAC14 homolog (811 aa).

HEAT repeat units follow at residues 81-119, 122-160, 240-278, 334-372, 375-412, 431-469, and 472-510; these read DSYM…VAKG, FRYF…IVMQ, ISYL…EIQK, QIDY…IAPK, LLQI…LVSK, SVDF…RTGG, and INMH…SHKS. Low complexity predominate over residues 775 to 785; the sequence is TSASGITTTAS. The disordered stretch occupies residues 775-811; it reads TSASGITTTASNSRDSFITRLPPTAALSTGARKKPKQ.

The protein belongs to the VAC14 family. As to quaternary structure, component of the PI(3,5)P2 regulatory complex, composed of ATG18, FIG4, FAB1, VAC14 and VAC7. VAC14 nucleates the assembly of the complex and serves as a scaffold.

The protein localises to the cytoplasm. It localises to the vacuole membrane. Functionally, the PI(3,5)P2 regulatory complex regulates both the synthesis and turnover of phosphatidylinositol 3,5-bisphosphate (PtdIns(3,5)P2). Regulates the synthesis of PtdIns(3,5)P2 by positive activation of FAB1 and by controlling FIG4 localization. The sequence is that of Protein VAC14 homolog from Schizosaccharomyces pombe (strain 972 / ATCC 24843) (Fission yeast).